The primary structure comprises 836 residues: Conserved oligomeric Golgi complex subunit 7 (836 aa).

2 coiled-coil regions span residues 29-49 and 107-127; these read QDSL…ASEE and LARV…LQDA. A disordered region spans residues 246 to 265; it reads KLANERSESQRLSSGDEFQS.

The protein belongs to the COG7 family. As to quaternary structure, component of the conserved oligomeric Golgi complex which is composed of eight different subunits and is required for normal Golgi morphology and localization. Interacts with COG5 and COG6.

Its subcellular location is the golgi apparatus membrane. In terms of biological role, required for normal Golgi function. Necessary for embryo development and pigmentation, especially for the expansion of cells and organs, and for the formation of the organized shoot apical meristem (SAM). Probably involved in the generation of the extra-cellular matrix. The polypeptide is Conserved oligomeric Golgi complex subunit 7 (Arabidopsis thaliana (Mouse-ear cress)).